The following is a 300-amino-acid chain: tRNA pseudouridine synthase B (300 aa).

Aspartate 38 acts as the Nucleophile in catalysis.

It belongs to the pseudouridine synthase TruB family. Type 1 subfamily.

It catalyses the reaction uridine(55) in tRNA = pseudouridine(55) in tRNA. Its function is as follows. Responsible for synthesis of pseudouridine from uracil-55 in the psi GC loop of transfer RNAs. The chain is tRNA pseudouridine synthase B from Dehalococcoides mccartyi (strain CBDB1).